The following is a 90-amino-acid chain: Putative regulatory protein Dred_1699 (90 aa).

It belongs to the RemA family.

The chain is Putative regulatory protein Dred_1699 from Desulforamulus reducens (strain ATCC BAA-1160 / DSM 100696 / MI-1) (Desulfotomaculum reducens).